The chain runs to 30 residues: Cytochrome b6-f complex subunit 8 (30 aa).

The chain crosses the membrane as a helical span at residues 4–24; it reads IISLGWGSLLAIFSFSIALVV.

It belongs to the PetN family. As to quaternary structure, the 4 large subunits of the cytochrome b6-f complex are cytochrome b6, subunit IV (17 kDa polypeptide, PetD), cytochrome f and the Rieske protein, while the 4 small subunits are PetG, PetL, PetM and PetN. The complex functions as a dimer.

It is found in the plastid. Its subcellular location is the chloroplast thylakoid membrane. Its function is as follows. Component of the cytochrome b6-f complex, which mediates electron transfer between photosystem II (PSII) and photosystem I (PSI), cyclic electron flow around PSI, and state transitions. The protein is Cytochrome b6-f complex subunit 8 of Gracilaria tenuistipitata var. liui (Red alga).